A 1011-amino-acid polypeptide reads, in one-letter code: Collagen alpha-2(I) chain (1011 aa).

Positions 1–1011 (SGGFDFSFLP…FGYEGDFYRA (1011 aa)) are disordered. 4 positions are modified to 4-hydroxyproline: P10, P13, P35, and P41. A compositionally biased stretch (low complexity) spans 28–67 (LMGPRGPPGASGAPGPQGFQGPAGEPGEPGQTGPAGARGP). Residue K106 is modified to 5-hydroxylysine; alternate. K106 carries O-linked (Gal...) hydroxylysine; alternate glycosylation. A compositionally biased stretch (low complexity) spans 167–182 (SVGPVGPAGPIGSAGP). The span at 282–291 (GESGGKGEPG) shows a compositional bias: gly residues. Positions 292–302 (SAGPQGPPGSS) are enriched in low complexity. Positions 323 to 332 (GLRGGPGSRG) are enriched in gly residues. Residues 345 to 361 (PAGARGASGPAGVRGPS) show a composition bias toward low complexity. A 4-hydroxyproline mark is found at P367 and P370. Over residues 396–415 (LPGIDGRPGPIGPAGARGEA) the composition is skewed to low complexity. A compositionally biased stretch (gly residues) spans 464 to 473 (GVQGGKGEQG). Composition is skewed to low complexity over residues 520 to 537 (PGES…SRGP) and 549 to 559 (EPGVVGAPGTA). Residues 560 to 578 (GPAGSGGPGERGAAGIPGG) show a composition bias toward gly residues. Low complexity-rich tracts occupy residues 588–635 (RGEV…PRGS) and 642–662 (VGPA…QPGA). Basic and acidic residues predominate over residues 663 to 672 (KGERGTKGPK). The segment covering 680–690 (PTGPVGSAGPA) has biased composition (low complexity). Positions 700-709 (GSRGDGGPPG) are enriched in gly residues. Low complexity predominate over residues 711–720 (TGFPGAAGRT). A compositionally biased stretch (gly residues) spans 757–766 (GETGAGGPPG). Low complexity-rich tracts occupy residues 774-801 (SGEP…LGLP) and 809-819 (LPGVAGAVGEP). Over residues 820–834 (GPLGIGPPGARGDGL) the composition is skewed to gly residues. Low complexity-rich tracts occupy residues 843-856 (YAGN…AGAP) and 872-887 (EPGP…ALGP). Residues 897–908 (RGDKGEPGEKGP) show a composition bias toward basic and acidic residues. Residues 981-993 (SGPPGPPGPPGPP) show a composition bias toward pro residues.

The protein belongs to the fibrillar collagen family. In terms of assembly, trimers of one alpha 2(I) and two alpha 1(I) chains. Interacts (via C-terminus) with TMEM131 (via PapD-L domain); the interaction is direct and is involved in assembly and TRAPPIII ER-to-Golgi transport complex-dependent secretion of collagen. In terms of processing, prolines at the third position of the tripeptide repeating unit (G-X-Y) are hydroxylated in some or all of the chains. In terms of tissue distribution, expressed in bones.

It is found in the secreted. The protein localises to the extracellular space. Its subcellular location is the extracellular matrix. In terms of biological role, type I collagen is a member of group I collagen (fibrillar forming collagen). The chain is Collagen alpha-2(I) chain from Neocnus comes (Miller's Hispaniolan ground sloth).